Here is a 301-residue protein sequence, read N- to C-terminus: Ribosomal protein L11 methyltransferase (301 aa).

The S-adenosyl-L-methionine site is built by threonine 146, glycine 167, aspartate 189, and asparagine 237.

This sequence belongs to the methyltransferase superfamily. PrmA family.

The protein localises to the cytoplasm. It catalyses the reaction L-lysyl-[protein] + 3 S-adenosyl-L-methionine = N(6),N(6),N(6)-trimethyl-L-lysyl-[protein] + 3 S-adenosyl-L-homocysteine + 3 H(+). Its function is as follows. Methylates ribosomal protein L11. The protein is Ribosomal protein L11 methyltransferase of Prochlorococcus marinus (strain MIT 9313).